The chain runs to 724 residues: Solute carrier organic anion transporter family member 4C1 (724 aa).

At 1–105 (MKSAKGIENL…QCLQRCNTPG (105 aa)) the chain is on the cytoplasmic side. S15, S16, S24, S26, and S28 each carry phosphoserine. The tract at residues 30 to 71 (IEVSALSSDPQRENSQPQELQKPQEPQKSPEPSLPSAPPNVS) is disordered. The span at 44 to 60 (SQPQELQKPQEPQKSPE) shows a compositional bias: low complexity. Residues 106–126 (GFLLHYCLLAVTQGIVVNGLV) traverse the membrane as a helical segment. Residues 127 to 145 (NISISTVEKRYEMKSSLTG) are Extracellular-facing. The chain crosses the membrane as a helical span at residues 146–166 (LISSSYDISFCLLSLFVSFFG). The Cytoplasmic segment spans residues 167 to 172 (ERGHKP). Residues 173–197 (RWLAFAAFMIGLGALVFSLPQFFSG) form a helical membrane-spanning segment. At 198-223 (EYKLGSLFEDTCVTTRNSTSCTSSTS) the chain is on the extracellular side. A helical transmembrane segment spans residues 224 to 254 (SLSNYLYVFILGQLLLGAGGTPLYTLGTAFL). The Cytoplasmic segment spans residues 255–274 (DDSVPTHKSSLYIGTGYAMS). Residues 275-295 (ILGPAIGYVLGGQLLTIYIDV) form a helical membrane-spanning segment. The Extracellular portion of the chain corresponds to 296 to 311 (AMGESTDVTEDDPRWL). The chain crosses the membrane as a helical span at residues 312 to 336 (GAWWIGFLLSWIFAWSLIIPFSCFP). Residues 337–377 (KHLPGTAEIQAGKTSQAHQSNSNADVKFGKSIKDFPAALKN) are Cytoplasmic-facing. The chain crosses the membrane as a helical span at residues 378-399 (LMKNAVFMCLVLSTSSEALITT). The Extracellular portion of the chain corresponds to 400 to 419 (GFATFLPKFIENQFGLTSSF). The chain crosses the membrane as a helical span at residues 420–443 (AATLGGAVLIPGAALGQILGGFLV). Over 444–447 (SKFR) the chain is Cytoplasmic. Residues 448–471 (MTCKNTMKFALFTSGVALTLSFVF) form a helical membrane-spanning segment. The Extracellular segment spans residues 472-580 (MYAKCENEPF…ETHCAKLPIF (109 aa)). The 55-residue stretch at 495 to 549 (GNLIAPCNANCNCSRSYYYPVCGDGVQYFSPCFAGCSNPVAHRKPKVYYNCSCIE) folds into the Kazal-like domain. 3 disulfides stabilise this stretch: C501-C530, C507-C526, and C516-C547. Residues 581–603 (LCIFFIVIIFTFMAGTPITVSIL) traverse the membrane as a helical segment. Residues 604-612 (RCVNHRQRS) lie on the Cytoplasmic side of the membrane. A helical transmembrane segment spans residues 613 to 638 (LALGIQFMVLRLLGTIPGPIIFGFTI). Residues 639 to 672 (DSTCILWDINDCGIKGACWIYDNIKMAHMLVAIS) lie on the Extracellular side of the membrane. A helical membrane pass occupies residues 673–690 (VTCKVITMFFNGFAIFLY). The Cytoplasmic segment spans residues 691-724 (KPPPSATDVSFHKENAVVTNVLAEQDLNKIVKEG).

It belongs to the organo anion transporter (TC 2.A.60) family. In terms of tissue distribution, predominantly expressed in kidney but also weakly expressed in both fetal liver and kidney.

The protein localises to the basolateral cell membrane. It catalyses the reaction estrone 3-sulfate(out) = estrone 3-sulfate(in). The catalysed reaction is L-thyroxine(out) = L-thyroxine(in). It carries out the reaction 3,3',5-triiodo-L-thyronine(out) = 3,3',5-triiodo-L-thyronine(in). The enzyme catalyses chenodeoxycholate(out) = chenodeoxycholate(in). It catalyses the reaction glycocholate(out) = glycocholate(in). The catalysed reaction is L-homoarginine(in) = L-homoarginine(out). It carries out the reaction L-arginine(in) = L-arginine(out). The enzyme catalyses N(omega),N(omega)-dimethyl-L-arginine(out) = N(omega),N(omega)-dimethyl-L-arginine(in). Its function is as follows. Mediates the transport of organic anions such as steroids (estrone 3-sulfate, chenodeoxycholate, glycocholate) and thyroid hormones (3,3',5-triiodo-L-thyronine (T3), L-thyroxine (T4)), in the kidney. Capable of transporting cAMP and pharmacological substances such as digoxin, ouabain and methotrexate. Transport is independent of sodium, chloride ion, and ATP. Transport activity is stimulated by an acidic extracellular environment due to increased substrate affinity to the transporter. The driving force for this transport activity is currently not known. The role of hydrogencarbonate (HCO3(-), bicarbonate) as the probable counteranion that exchanges for organic anions is still not well defined. Functions as an uptake transporter at the apical membrane, suggesting a role in renal reabsorption. Involved in the renal secretion of the uremic toxin ADMA (N(omega),N(omega)-dimethyl-L-arginine or asymmetrical dimethylarginine), which is associated to cardiovascular events and mortality, and the structurally related amino acids L-arginine and L-homoarginine (a cardioprotective biomarker). Can act bidirectionally, suggesting a dual protective role of this transport protein; exporting L-homoarginine after being synthesized in proximal tubule cells, and mediating uptake of ADMA from the blood into proximal tubule cells where it is degraded by the enzyme dimethylarginine dimethylaminohydrolase 1 (DDAH1). May be involved in sperm maturation by enabling directed movement of organic anions and compounds within or between cells. This ion-transporting process is important to maintain the strict epididymal homeostasis necessary for sperm maturation. May have a role in secretory functions since seminal vesicle epithelial cells are assumed to secrete proteins involved in decapacitation by modifying surface proteins to facilitate the acquisition of the ability to fertilize the egg. This chain is Solute carrier organic anion transporter family member 4C1, found in Homo sapiens (Human).